The following is a 116-amino-acid chain: SGSCSLKTCWLQLADFRSVGTQLKERYDLAKVVRVTRKSRLEPRNRKLGTPTPTDLVHLESSPDYCARNGSSGSLGTIGRECDKRSAGMDGCQLMCCGRGYDHFKVTVTQRCNCKF.

A lipid anchor (O-palmitoleoyl serine; by PORCN) is attached at S1. N69 is a glycosylation site (N-linked (GlcNAc...) asparagine). Cysteines 82 and 97 form a disulfide.

The protein belongs to the Wnt family. Post-translationally, palmitoleoylation is required for efficient binding to frizzled receptors. Depalmitoleoylation leads to Wnt signaling pathway inhibition.

It is found in the secreted. Its subcellular location is the extracellular space. It localises to the extracellular matrix. In terms of biological role, ligand for members of the frizzled family of seven transmembrane receptors. Probable developmental protein. May be a signaling molecule which affects the development of discrete regions of tissues. Is likely to signal over only few cell diameters. The polypeptide is Protein Wnt-5(III) (WNT-5(III)) (Eptatretus stoutii (Pacific hagfish)).